The sequence spans 336 residues: D-alanine--D-alanine ligase (336 aa).

Residues 124–330 form the ATP-grasp domain; the sequence is KMWFSALGIP…FATFLEQAIL (207 aa). 154–209 contacts ATP; it reads AFDEWGSVFIKAASQGSSVGCFPAHRREDIPGLVRKAFEYAPFVVVEKTIKARELE. Mg(2+)-binding residues include D284, E297, and N299.

This sequence belongs to the D-alanine--D-alanine ligase family. It depends on Mg(2+) as a cofactor. Requires Mn(2+) as cofactor.

It is found in the cytoplasm. It carries out the reaction 2 D-alanine + ATP = D-alanyl-D-alanine + ADP + phosphate + H(+). The protein operates within cell wall biogenesis; peptidoglycan biosynthesis. In terms of biological role, cell wall formation. In Shewanella amazonensis (strain ATCC BAA-1098 / SB2B), this protein is D-alanine--D-alanine ligase.